Here is a 1380-residue protein sequence, read N- to C-terminus: DNA-directed RNA polymerase subunit beta (1380 aa).

It belongs to the RNA polymerase beta chain family. The RNAP catalytic core consists of 2 alpha, 1 beta, 1 beta' and 1 omega subunit. When a sigma factor is associated with the core the holoenzyme is formed, which can initiate transcription.

The enzyme catalyses RNA(n) + a ribonucleoside 5'-triphosphate = RNA(n+1) + diphosphate. DNA-dependent RNA polymerase catalyzes the transcription of DNA into RNA using the four ribonucleoside triphosphates as substrates. The chain is DNA-directed RNA polymerase subunit beta from Ehrlichia chaffeensis (strain ATCC CRL-10679 / Arkansas).